Reading from the N-terminus, the 179-residue chain is Large ribosomal subunit protein uL5 (179 aa).

This sequence belongs to the universal ribosomal protein uL5 family. As to quaternary structure, part of the 50S ribosomal subunit; part of the 5S rRNA/L5/L18/L25 subcomplex. Contacts the 5S rRNA and the P site tRNA. Forms a bridge to the 30S subunit in the 70S ribosome.

Its function is as follows. This is one of the proteins that bind and probably mediate the attachment of the 5S RNA into the large ribosomal subunit, where it forms part of the central protuberance. In the 70S ribosome it contacts protein S13 of the 30S subunit (bridge B1b), connecting the 2 subunits; this bridge is implicated in subunit movement. Contacts the P site tRNA; the 5S rRNA and some of its associated proteins might help stabilize positioning of ribosome-bound tRNAs. This Synechococcus sp. (strain RCC307) protein is Large ribosomal subunit protein uL5.